We begin with the raw amino-acid sequence, 104 residues long: MSTYAIIKTGGKQVKVEVGQAIYVEKIDAEAGAEVTFNEVVLVGGDKTVVGTPVVEGATVVGTVEKQGKQKKVVTFKYKPKKGSHRKQGHRQPYTKVVINAINA.

This sequence belongs to the bacterial ribosomal protein bL21 family. In terms of assembly, part of the 50S ribosomal subunit. Contacts protein L20.

In terms of biological role, this protein binds to 23S rRNA in the presence of protein L20. The sequence is that of Large ribosomal subunit protein bL21 from Streptococcus pyogenes serotype M1.